The sequence spans 387 residues: Dual specificity mitogen-activated protein kinase kinase mek-2 (387 aa).

Residues 1 to 37 (MSSGKRRNPLGLSLPPTVNEQSESGEATAEEATATVP) are disordered. A compositionally biased stretch (polar residues) spans 16-25 (PTVNEQSESG). Positions 26-35 (EATAEEATAT) are enriched in low complexity. One can recognise a Protein kinase domain in the interval 73-360 (LQTEGELGHG…LKSLTADVFF (288 aa)). Residues 79–87 (LGHGNGGVV) and K102 each bind ATP. The active-site Proton acceptor is the D195. A phosphoserine mark is found at S223 and S227.

The protein belongs to the protein kinase superfamily. STE Ser/Thr protein kinase family. MAP kinase kinase subfamily. As to quaternary structure, interacts with ksr-1.

The catalysed reaction is L-seryl-[protein] + ATP = O-phospho-L-seryl-[protein] + ADP + H(+). The enzyme catalyses L-threonyl-[protein] + ATP = O-phospho-L-threonyl-[protein] + ADP + H(+). It catalyses the reaction L-tyrosyl-[protein] + ATP = O-phospho-L-tyrosyl-[protein] + ADP + H(+). Its activity is regulated as follows. Activated by tyrosine and threonine phosphorylation catalyzed by MAP kinase kinase kinases. Functionally, functions in the let-60 Ras signaling pathway; acts downstream of lin-45 raf kinase, but before the sur-1/mpk-1 gene product in controlling vulval cell differentiation. Required for progression of developing oocytes through the pachytene stage. Plays a role in responses to M.nematophilum-mediated bacterial infection by promoting tail swelling and preventing constipation. Involved in fluid homeostasis. Positively regulates lifespan upstream of mpk-1. In Caenorhabditis elegans, this protein is Dual specificity mitogen-activated protein kinase kinase mek-2 (mek-2).